The primary structure comprises 113 residues: UPF0212 protein AF_0282 (113 aa).

This sequence belongs to the UPF0212 family.

This Archaeoglobus fulgidus (strain ATCC 49558 / DSM 4304 / JCM 9628 / NBRC 100126 / VC-16) protein is UPF0212 protein AF_0282.